Consider the following 20-residue polypeptide: Cytosol aminopeptidase (20 aa).

Phosphoserine is present on Ser-6.

This sequence belongs to the peptidase M17 family. As to quaternary structure, homohexamer. The cofactor is Zn(2+). Requires Mn(2+) as cofactor.

It is found in the cytoplasm. It carries out the reaction Release of an N-terminal amino acid, Xaa-|-Yaa-, in which Xaa is preferably Leu, but may be other amino acids including Pro although not Arg or Lys, and Yaa may be Pro. Amino acid amides and methyl esters are also readily hydrolyzed, but rates on arylamides are exceedingly low.. The catalysed reaction is an S-substituted L-cysteinylglycine + H2O = an S-substituted L-cysteine + glycine. The enzyme catalyses L-cysteinylglycine + H2O = L-cysteine + glycine. It catalyses the reaction S-benzyl-L-cysteinylglycine + H2O = S-benzyl-L-cysteine + glycine. It carries out the reaction Release of N-terminal proline from a peptide.. Its function is as follows. Cytosolic metallopeptidase that catalyzes the removal of unsubstituted N-terminal hydrophobic amino acids from various peptides. The presence of Zn(2+) ions is essential for the peptidase activity, and the association with other cofactors can modulate the substrate spectificity of the enzyme. For instance, in the presence of Mn(2+), it displays a specific Cys-Gly hydrolyzing activity of Cys-Gly-S-conjugates. Involved in the metabolism of glutathione and in the degradation of glutathione S-conjugates, which may play a role in the control of the cell redox status. This Mesocricetus auratus (Golden hamster) protein is Cytosol aminopeptidase.